A 493-amino-acid chain; its full sequence is Transcript termination protein A18 (493 aa).

Residues 100–256 form the Helicase ATP-binding domain; sequence MIELKRPLYI…NSIINIAKLS (157 aa). 113–120 serves as a coordination point for ATP; that stretch reads LACGFGKT. Positions 206 to 209 match the DESH box motif; that stretch reads DESH. The 148-residue stretch at 309–456 folds into the Helicase C-terminal domain; the sequence is ILDTLVEEFK…IISLSVDKLG (148 aa).

The protein belongs to the helicase family. Poxviruses subfamily. Interacts with G2. Might be part of a transcription complex composed at least of G2, A18, and H5.

It localises to the virion. Its function is as follows. DNA helicase which seems to act as a postreplicative transcription termination factor. Involved in ATP-dependent release of nascent RNA. Forms a stable complex with single-stranded DNA, and to a lesser extent RNA. The chain is Transcript termination protein A18 from Mus musculus (Mouse).